The chain runs to 156 residues: IFN signaling evasion protein OPG029 (156 aa).

The protein belongs to the orthopoxvirus OPG029 family. Interacts with host TANK, TBKBP1 and AZI2; these interactions prevent interferon production. Interacts with host STAT2.

In terms of biological role, prevents establishment of cellular antiviral state by blocking virus-induced phosphorylation and activation of interferon regulatory factors 3/IRF3 and 7/IRF7, transcription factors critical for the induction of interferons alpha and beta. This blockage is produced through the inhibition of host TBK1, by binding host TBK1 adapter proteins TBKBP1 and AZI2, thereby producing a strong inhibition of the phosphorylation and activation of IRF3 and IRF7. Also acts as an inhibitor of the cellular response to type I IFN by interacting with host STAT2. Mechanistically, exerts its inhibitory effect after host ISGF3 complex (composed of STAT1, STAT2 and IRF9) binding to the interferon stimulated response element (ISRE). The sequence is that of IFN signaling evasion protein OPG029 (OPG029) from Variola virus (isolate Human/India/Ind3/1967) (VARV).